A 103-amino-acid chain; its full sequence is Leukocyte cysteine proteinase inhibitor 1 (103 aa).

Blocked amino end (Met); partial is present on M1. The segment at 1 to 20 (MESEEMLAGGLTEPRPATPE) is disordered. The Secondary area of contact signature appears at 51-55 (QVVAG).

Belongs to the cystatin family.

The protein resides in the cytoplasm. In terms of biological role, potent inhibitor of cathepsins L and S, and papain. The polypeptide is Leukocyte cysteine proteinase inhibitor 1 (Sus scrofa (Pig)).